The sequence spans 164 residues: CASP-like protein 1C2 (164 aa).

The Cytoplasmic portion of the chain corresponds to 1-8 (MVKLTQRL). Residues 9–29 (GGLVLRFAAFCAALGAVIAMI) traverse the membrane as a helical segment. The Extracellular portion of the chain corresponds to 30 to 51 (TSRERSSFFVISLVAKYSDLAA). The helical transmembrane segment at 52–72 (FKYFVIANAIVTVYSFLVLFL) threads the bilayer. The Cytoplasmic segment spans residues 73–80 (PKESLLWK). A helical membrane pass occupies residues 81–101 (FVVVLDLMVTMLLTSSLSAAV). At 102–129 (AVAQVGKRGNANAGWLPICGQVPRFCDQ) the chain is on the extracellular side. Residues 130 to 150 (ITGALIAGLVALVLYVFLLIF) form a helical membrane-spanning segment. The Cytoplasmic portion of the chain corresponds to 151–164 (SIHHVVDPFLLRKS).

Belongs to the Casparian strip membrane proteins (CASP) family. As to quaternary structure, homodimer and heterodimers.

Its subcellular location is the cell membrane. This is CASP-like protein 1C2 from Arabidopsis thaliana (Mouse-ear cress).